The primary structure comprises 96 residues: Small ribosomal subunit protein bS6 (96 aa).

This sequence belongs to the bacterial ribosomal protein bS6 family.

Functionally, binds together with bS18 to 16S ribosomal RNA. In Natranaerobius thermophilus (strain ATCC BAA-1301 / DSM 18059 / JW/NM-WN-LF), this protein is Small ribosomal subunit protein bS6.